Here is a 237-residue protein sequence, read N- to C-terminus: tRNA(His) guanylyltransferase (237 aa).

The residue at position 2 (alanine 2) is an N-acetylalanine. Mg(2+)-binding residues include aspartate 29 and glycine 30. Positions 32, 33, 34, 44, and 47 each coordinate GTP. Aspartate 77 is a binding site for Mg(2+).

The protein belongs to the tRNA(His) guanylyltransferase family. In terms of assembly, homotetramer. Requires Mg(2+) as cofactor.

The catalysed reaction is a 5'-end ribonucleotide-tRNA(His) + GTP + ATP + H2O = a 5'-end phospho-guanosine-ribonucleotide-tRNA(His) + AMP + 2 diphosphate + H(+). It carries out the reaction a 5'-end ribonucleotide-RNA + a ribonucleoside 5'-triphosphate + ATP + H2O = a 5'-end phospho-ribonucleoside-ribonucleotide-RNA + AMP + 2 diphosphate + H(+). Acts as a tRNA(His) guanylyltransferase that catalyzes 3'-5' addition of a single guanosine residue to the -1 position of tRNA(His), to form a non-Watson-Crick G(-1):A-73 base pair. After addition of G(-1), THG1 removes pyrophosphate from the tRNA 5'-end, generating 5'-monophosphorylated G(-1)-containing tRNA which is important for recognition of tRNA(His) by its cognate histidyl-tRNA synthetase. In addition to the single-G(-1) addition reaction, THG1 polymerizes multiple G residues to the 5'-end of tRNA(His) variants using the 3'-end of the tRNA(His) acceptor stem as a template. This is tRNA(His) guanylyltransferase from Saccharomyces cerevisiae (strain ATCC 204508 / S288c) (Baker's yeast).